The following is a 592-amino-acid chain: Peroxisomal targeting signal receptor (592 aa).

Cys10 is covalently cross-linked (Glycyl cysteine thioester (Cys-Gly) (interchain with G-Cter in ubiquitin)). The interval 11 to 33 is amphipathic helix 1 (AH1); it reads SVNGNAVAQFNKHTQQDRSLQQQ. A Glycyl lysine isopeptide (Lys-Gly) (interchain with G-Cter in ubiquitin) cross-link involves residue Lys22. The span at 22–46 shows a compositional bias: polar residues; sequence KHTQQDRSLQQQVANQHGNVAQNQG. The segment at 22–49 is disordered; sequence KHTQQDRSLQQQVANQHGNVAQNQGFKK. The segment at 58 to 76 is amphipathic helix 2 (AH2); sequence RANLDQFMNNGAPQNSFQF. Short sequence motifs (wxxxF/Y motif) lie at residues 100–104, 128–132, and 185–189; these read WSQDF, WASEF, and WENQF. Positions 223 to 239 are amphipathic helix 4 (AH4); sequence FQEVWDSLNSESFENDF. Residues 262-266 carry the WxxxF/Y motif 4 motif; it reads WEKDF. 5 TPR repeats span residues 295–329, 330–363, 440–473, 475–507, and 509–541; these read DQDPYEIGLQLMENGAKLSEAALAFEAAIQRDENH, VDAWLKLGEVQTQNEKEIAGISALEKCLELHPEN, ADVQMGLGVLFYANEEFDKTIDCFKAALSIRPDD, ILWNRLGASLANSNRSEEAVDAYFKALQLKPTF, and RARYNLGVSCINIGCYKEAAEHLLSGLSMHQVE.

Belongs to the peroxisomal targeting signal receptor family. In terms of assembly, interacts (via WxxxF/Y and LVxEF motifs) with PEX14; promoting translocation through the PEX13-PEX14 docking complex. In terms of processing, monoubiquitinated at Cys-10 by PEX2 during PEX5 passage through the retrotranslocation channel: monoubiquitination acts as a signal for PEX5 extraction and is required for proper export from peroxisomes and recycling. When PEX5 recycling is compromised, polyubiquitinated at Lys-22 by PEX10 during its passage through the retrotranslocation channel, leading to its degradation.

The protein resides in the cytoplasm. Its subcellular location is the cytosol. The protein localises to the peroxisome matrix. In terms of biological role, receptor that mediates peroxisomal import of proteins containing a C-terminal PTS1-type tripeptide peroxisomal targeting signal (SKL-type). Binds to cargo proteins containing a PTS1 peroxisomal targeting signal in the cytosol, and translocates them into the peroxisome matrix by passing through the PEX13-PEX14 docking complex along with cargo proteins. PEX5 receptor is then retrotranslocated into the cytosol, leading to release of bound cargo in the peroxisome matrix, and reset for a subsequent peroxisome import cycle. The protein is Peroxisomal targeting signal receptor (PEX5) of Candida albicans (strain SC5314 / ATCC MYA-2876) (Yeast).